A 308-amino-acid polypeptide reads, in one-letter code: tRNA dimethylallyltransferase (308 aa).

9–16 (GPTAAGKT) provides a ligand contact to ATP. Substrate is bound at residue 11 to 16 (TAAGKT). 2 interaction with substrate tRNA regions span residues 34–37 (DSMQ) and 158–162 (QRLLR).

This sequence belongs to the IPP transferase family. Monomer. The cofactor is Mg(2+).

It carries out the reaction adenosine(37) in tRNA + dimethylallyl diphosphate = N(6)-dimethylallyladenosine(37) in tRNA + diphosphate. Functionally, catalyzes the transfer of a dimethylallyl group onto the adenine at position 37 in tRNAs that read codons beginning with uridine, leading to the formation of N6-(dimethylallyl)adenosine (i(6)A). The chain is tRNA dimethylallyltransferase from Maricaulis maris (strain MCS10) (Caulobacter maris).